The primary structure comprises 237 residues: Class B acid phosphatase (237 aa).

The N-terminal stretch at 1 to 23 (MKKITLALSAVCLLFTLNHSANA) is a signal peptide. D69 serves as the catalytic Nucleophile. The Mg(2+) site is built by D69 and D71. The active-site Proton donor is D71. Substrate-binding positions include 137 to 138 (TG) and K177. A Mg(2+)-binding site is contributed by D192.

It belongs to the class B bacterial acid phosphatase family. Homotetramer. Mg(2+) serves as cofactor.

It is found in the periplasm. It catalyses the reaction a phosphate monoester + H2O = an alcohol + phosphate. Functionally, dephosphorylates several organic phosphate monoesters. Also has a phosphotransferase activity catalyzing the transfer of low-energy phosphate groups from organic phosphate monoesters to free hydroxyl groups of various organic compounds. The protein is Class B acid phosphatase of Salmonella arizonae (strain ATCC BAA-731 / CDC346-86 / RSK2980).